Reading from the N-terminus, the 154-residue chain is Myoglobin (154 aa).

One can recognise a Globin domain in the interval 2 to 148 (GLSDGEWQLV…FRNDIAAKYK (147 aa)). S4 is subject to Phosphoserine. Residue H65 participates in nitrite binding. H65 is an O2 binding site. Position 68 is a phosphothreonine (T68). H94 serves as a coordination point for heme b.

Belongs to the globin family. As to quaternary structure, monomeric.

The protein resides in the cytoplasm. The protein localises to the sarcoplasm. It catalyses the reaction Fe(III)-heme b-[protein] + nitric oxide + H2O = Fe(II)-heme b-[protein] + nitrite + 2 H(+). It carries out the reaction H2O2 + AH2 = A + 2 H2O. Monomeric heme protein which primary function is to store oxygen and facilitate its diffusion within muscle tissues. Reversibly binds oxygen through a pentacoordinated heme iron and enables its timely and efficient release as needed during periods of heightened demand. Depending on the oxidative conditions of tissues and cells, and in addition to its ability to bind oxygen, it also has a nitrite reductase activity whereby it regulates the production of bioactive nitric oxide. Under stress conditions, like hypoxia and anoxia, it also protects cells against reactive oxygen species thanks to its pseudoperoxidase activity. The chain is Myoglobin (MB) from Proechimys guairae (Guaira spiny rat).